Here is a 522-residue protein sequence, read N- to C-terminus: Amine oxidase [flavin-containing] (522 aa).

Topologically, residues 1–492 (MTANAYDVIV…WERNLPSVGG (492 aa)) are cytoplasmic. S-8alpha-FAD cysteine is present on Cys-398. Residues 493 to 513 (FLKFMGVSSFLAAATAAGLVA) form a helical; Anchor for type IV membrane protein membrane-spanning segment. Residues 514-522 (CKKGLLPRC) are Mitochondrial intermembrane-facing.

Belongs to the flavin monoamine oxidase family. In terms of assembly, monomer, homo- or heterodimer (containing two subunits of similar size). Each subunit contains a covalently bound flavin. Enzymatically active as monomer. Requires FAD as cofactor. In terms of tissue distribution, strongest expression in brain and intestine, followed by liver, heart and gill. Little expression in spleen, eye or muscle. In brain, highest activity in noradrenergic and serotonergic cell groups and those of the habenulointerpeduncular pathway; moderate levels in dopaminergic cell clusters.

Its subcellular location is the mitochondrion outer membrane. The catalysed reaction is a secondary aliphatic amine + O2 + H2O = a primary amine + an aldehyde + H2O2. It carries out the reaction a primary methyl amine + O2 + H2O = an aldehyde + H2O2 + NH4(+). The enzyme catalyses serotonin + O2 + H2O = (5-hydroxyindol-3-yl)acetaldehyde + H2O2 + NH4(+). It catalyses the reaction 2-phenylethylamine + O2 + H2O = 2-phenylacetaldehyde + H2O2 + NH4(+). The catalysed reaction is tyramine + O2 + H2O = (4-hydroxyphenyl)acetaldehyde + H2O2 + NH4(+). It carries out the reaction dopamine + O2 + H2O = 3,4-dihydroxyphenylacetaldehyde + H2O2 + NH4(+). The enzyme catalyses (R)-adrenaline + O2 + H2O = (R)-3,4-dihydroxymandelaldehyde + methylamine + H2O2. It catalyses the reaction (R)-noradrenaline + O2 + H2O = (R)-3,4-dihydroxymandelaldehyde + H2O2 + NH4(+). The catalysed reaction is kynuramine + O2 + H2O = 3-(2-aminophenyl)-3-oxopropanal + H2O2 + NH4(+). It carries out the reaction tryptamine + O2 + H2O = indole-3-acetaldehyde + H2O2 + NH4(+). Its activity is regulated as follows. Inhibited by both clorgyline (selective MAOA inhibitor) and deprenyl (selective MAOB inhibitor). Catalyzes the oxidative deamination of biogenic and xenobiotic amines and has important functions in the metabolism of neuroactive and vasoactive amines in the central nervous system and peripheral tissues. Preferentially oxidizes serotonin and tyramine. Also catalyzes the oxidative deamination of kynuramine to 3-(2-aminophenyl)-3-oxopropanal that can spontaneously condense to 4-hydroxyquinoline. The protein is Amine oxidase [flavin-containing] of Danio rerio (Zebrafish).